A 333-amino-acid polypeptide reads, in one-letter code: MYTYDSSGETLKIAIAWKIILKKPKGKNIKDYIEALRKGIEDQEHCEKYASTLLEPRPKTKKDVVLKNSNVTECVALKAKPFSKKIEDMDIFLLTNVHENLQEKRQTSGSLAHLDIEYTFNGLFRFLKCTADIKLKQTKVYEGADFLRIKTLFEEIFMFLKRDCKSPLVLTRLVELGDYVLDLIIITQSIMQNNANNGTGVISRAKFLEFYVFLEQLIFNKLSFASVEQLEKLLDQIVKRMKICFTYCKNDNPSIRLLYSECFFSYAEIYFPCLHSFDAQLSSAASKCVQILRDIITNEELQTDKQELSKSAYSAPSILLIGLKDMLFPEDIS.

The protein belongs to the MEI4L family. As to quaternary structure, interacts with Rec7, as part of the meiotic recombination initiation complex.

It localises to the cytoplasm. The protein localises to the nucleus. Functionally, required for correct meiotic chromosome segregation and recombination. Accessory protein required for Rec12 activity, which is involved in formation of the double-strand breaks (DSBs) that initiate meiotic recombination. This is Meiotic recombination protein rec24 (rec24) from Schizosaccharomyces pombe (strain 972 / ATCC 24843) (Fission yeast).